Reading from the N-terminus, the 496-residue chain is L-arabinose isomerase (496 aa).

Mn(2+) is bound by residues Glu306, Glu331, His348, and His447.

The protein belongs to the arabinose isomerase family. Mn(2+) is required as a cofactor.

It carries out the reaction beta-L-arabinopyranose = L-ribulose. It participates in carbohydrate degradation; L-arabinose degradation via L-ribulose; D-xylulose 5-phosphate from L-arabinose (bacterial route): step 1/3. In terms of biological role, catalyzes the conversion of L-arabinose to L-ribulose. The polypeptide is L-arabinose isomerase (Geobacillus kaustophilus (strain HTA426)).